The sequence spans 178 residues: Capsid assembly scaffolding protein (178 aa).

This sequence belongs to the SPP1-like scaffolding protein family. In terms of assembly, homodimer.

Its function is as follows. Scaffolding protein involved in the icosahedric procapsid assembly. Coassembles with the capsid proteins to form the procapsid, in which the scaffolding protein is found within the external shell of icosahedrally arranged capsid protein subunits. In a subsequent step the scaffolding protein molecules are released from the procapsid. This is Capsid assembly scaffolding protein (g20) from Lactobacillus delbrueckii (Lactococcus delbrueckii bacteriophage LL-H).